Reading from the N-terminus, the 542-residue chain is Thermosome subunit (542 aa).

This sequence belongs to the TCP-1 chaperonin family. As to quaternary structure, forms an oligomeric complex of eight-membered rings.

In terms of biological role, molecular chaperone; binds unfolded polypeptides in vitro, and has a weak ATPase activity. This Methanocaldococcus jannaschii (strain ATCC 43067 / DSM 2661 / JAL-1 / JCM 10045 / NBRC 100440) (Methanococcus jannaschii) protein is Thermosome subunit (ths).